Here is a 156-residue protein sequence, read N- to C-terminus: ATP synthase subunit b (156 aa).

The chain crosses the membrane as a helical span at residues 7–27; it reads LIGQTVAFIIFVWFCMKFVWP.

Belongs to the ATPase B chain family. As to quaternary structure, F-type ATPases have 2 components, F(1) - the catalytic core - and F(0) - the membrane proton channel. F(1) has five subunits: alpha(3), beta(3), gamma(1), delta(1), epsilon(1). F(0) has three main subunits: a(1), b(2) and c(10-14). The alpha and beta chains form an alternating ring which encloses part of the gamma chain. F(1) is attached to F(0) by a central stalk formed by the gamma and epsilon chains, while a peripheral stalk is formed by the delta and b chains.

It localises to the cell inner membrane. F(1)F(0) ATP synthase produces ATP from ADP in the presence of a proton or sodium gradient. F-type ATPases consist of two structural domains, F(1) containing the extramembraneous catalytic core and F(0) containing the membrane proton channel, linked together by a central stalk and a peripheral stalk. During catalysis, ATP synthesis in the catalytic domain of F(1) is coupled via a rotary mechanism of the central stalk subunits to proton translocation. Functionally, component of the F(0) channel, it forms part of the peripheral stalk, linking F(1) to F(0). The chain is ATP synthase subunit b from Shewanella sp. (strain ANA-3).